The primary structure comprises 561 residues: Carboxylesterase 4A (561 aa).

The first 20 residues, 1-20 (MRWILCWSLTLCLMAQTALG), serve as a signal peptide directing secretion. Cysteine 88 and cysteine 116 are joined by a disulfide. Residue asparagine 214 is glycosylated (N-linked (GlcNAc...) asparagine). Residue serine 221 is the Acyl-ester intermediate of the active site. A disulfide bond links cysteine 273 and cysteine 284. The N-linked (GlcNAc...) asparagine glycan is linked to asparagine 276. Glutamate 353 functions as the Charge relay system in the catalytic mechanism. Asparagine 388 carries N-linked (GlcNAc...) asparagine glycosylation. Histidine 467 serves as the catalytic Charge relay system.

The protein belongs to the type-B carboxylesterase/lipase family.

Its subcellular location is the secreted. In terms of biological role, probable carboxylesterase. In Homo sapiens (Human), this protein is Carboxylesterase 4A (CES4A).